The chain runs to 464 residues: Argininosuccinate lyase (464 aa).

This sequence belongs to the lyase 1 family. Argininosuccinate lyase subfamily.

Its subcellular location is the cytoplasm. It carries out the reaction 2-(N(omega)-L-arginino)succinate = fumarate + L-arginine. The protein operates within amino-acid biosynthesis; L-arginine biosynthesis; L-arginine from L-ornithine and carbamoyl phosphate: step 3/3. The polypeptide is Argininosuccinate lyase (Azotobacter vinelandii (strain DJ / ATCC BAA-1303)).